Reading from the N-terminus, the 138-residue chain is Large ribosomal subunit protein uL16 (138 aa).

Basic residues predominate over residues 1–16; the sequence is MLIPRRVKHRKQHHPG. The interval 1-25 is disordered; sequence MLIPRRVKHRKQHHPGRSGQATGGT.

This sequence belongs to the universal ribosomal protein uL16 family. Part of the 50S ribosomal subunit.

In terms of biological role, binds 23S rRNA and is also seen to make contacts with the A and possibly P site tRNAs. This Renibacterium salmoninarum (strain ATCC 33209 / DSM 20767 / JCM 11484 / NBRC 15589 / NCIMB 2235) protein is Large ribosomal subunit protein uL16.